Consider the following 246-residue polypeptide: 33kDa venom protein (246 aa).

The first 20 residues, Met1–Pro20, serve as a signal peptide directing secretion. Tandem repeats lie at residues Gly83–Thr96, Ala97–Ser110, Ala111–Ser124, Val125–Ala138, Val139–Thr152, Ala153–Ser166, and Ala167–Thr180. The interval Gly83–Ile243 is 12 X approximate tandem repeats of [AV][DE]X[VL]SGSX[DE]QX[KR]X[ST]. The interval Glu88 to Gln246 is disordered. The span at Glu112–Ser123 shows a compositional bias: polar residues. The segment covering Asp175–Glu186 has biased composition (basic and acidic residues). The 8; half-length repeat unit spans residues Val181–Pro187. 4 tandem repeats follow at residues Ala188–Thr201, Thr202–Ser215, Ala216–Ser229, and Val230–Ile243. Positions Glu217 to Ser228 are enriched in polar residues.

In terms of tissue distribution, expressed by the venom gland.

It localises to the secreted. This is 33kDa venom protein from Chelonus sp. nr. curvimaculatus (Parasitic wasp).